A 311-amino-acid chain; its full sequence is D-alanine--D-alanine ligase (311 aa).

The ATP-grasp domain maps to 105–306; sequence KQLYIHAGLP…FSALLDRLIE (202 aa). 133-188 is an ATP binding site; that stretch reads ADRLGLPVVVKPEHEGSSIGLSIVRNRDQLAAAVETGWQYDRRCLIEKYVHGIEIT. Mg(2+) is bound by residues Asp-261, Glu-273, and Asn-275.

This sequence belongs to the D-alanine--D-alanine ligase family. It depends on Mg(2+) as a cofactor. The cofactor is Mn(2+).

It is found in the cytoplasm. The catalysed reaction is 2 D-alanine + ATP = D-alanyl-D-alanine + ADP + phosphate + H(+). Its pathway is cell wall biogenesis; peptidoglycan biosynthesis. In terms of biological role, cell wall formation. This chain is D-alanine--D-alanine ligase, found in Syntrophobacter fumaroxidans (strain DSM 10017 / MPOB).